We begin with the raw amino-acid sequence, 340 residues long: MAKVFYNGDINEGVLQGKTVAIIGYGSQGHAHAQNLRDSGQEVIVGLRPGKSWDKAAEDGFQVYSVREAASRADVIMILLPDEHQPTVYKNEIEPELSEGKTLAFAHGFNVHFNQIVPPATVDVFLAAPKGPGHLVRRTYVDGAGVPGLVAVYQDATGQAKDIALAYSKMNGSARAGVIETTFQEETETDLFGEQAVLCGGTSALVKAGFETLVEAGYQPEVAYFECLHELKLIVDLMYEGGLEYMRYSISDTAQWGDFQAGPRVVTAETKQAMKDILSDIQTGKFAKGWILENQANRPEFTAINEREKNHPLEVVGRELREMMPFVKAKSKGVVGSAKN.

The KARI N-terminal Rossmann domain maps to 2-181; the sequence is AKVFYNGDIN…GSARAGVIET (180 aa). NADP(+) contacts are provided by residues 25 to 28, arginine 48, serine 52, and 82 to 85; these read YGSQ and DEHQ. Residue histidine 107 is part of the active site. Glycine 133 provides a ligand contact to NADP(+). In terms of domain architecture, KARI C-terminal knotted spans 182-327; the sequence is TFQEETETDL…RELREMMPFV (146 aa). Mg(2+)-binding residues include aspartate 190, glutamate 194, glutamate 226, and glutamate 230. Substrate is bound at residue serine 251.

This sequence belongs to the ketol-acid reductoisomerase family. The cofactor is Mg(2+).

The enzyme catalyses (2R)-2,3-dihydroxy-3-methylbutanoate + NADP(+) = (2S)-2-acetolactate + NADPH + H(+). It carries out the reaction (2R,3R)-2,3-dihydroxy-3-methylpentanoate + NADP(+) = (S)-2-ethyl-2-hydroxy-3-oxobutanoate + NADPH + H(+). It participates in amino-acid biosynthesis; L-isoleucine biosynthesis; L-isoleucine from 2-oxobutanoate: step 2/4. It functions in the pathway amino-acid biosynthesis; L-valine biosynthesis; L-valine from pyruvate: step 2/4. Its function is as follows. Involved in the biosynthesis of branched-chain amino acids (BCAA). Catalyzes an alkyl-migration followed by a ketol-acid reduction of (S)-2-acetolactate (S2AL) to yield (R)-2,3-dihydroxy-isovalerate. In the isomerase reaction, S2AL is rearranged via a Mg-dependent methyl migration to produce 3-hydroxy-3-methyl-2-ketobutyrate (HMKB). In the reductase reaction, this 2-ketoacid undergoes a metal-dependent reduction by NADPH to yield (R)-2,3-dihydroxy-isovalerate. This Halalkalibacterium halodurans (strain ATCC BAA-125 / DSM 18197 / FERM 7344 / JCM 9153 / C-125) (Bacillus halodurans) protein is Ketol-acid reductoisomerase (NADP(+)).